The primary structure comprises 420 residues: D-tagatose-1,6-bisphosphate aldolase subunit GatZ (420 aa).

It belongs to the GatZ/KbaZ family. GatZ subfamily. As to quaternary structure, forms a complex with GatY.

It functions in the pathway carbohydrate metabolism; D-tagatose 6-phosphate degradation; D-glyceraldehyde 3-phosphate and glycerone phosphate from D-tagatose 6-phosphate: step 2/2. Component of the tagatose-1,6-bisphosphate aldolase GatYZ that is required for full activity and stability of the Y subunit. Could have a chaperone-like function for the proper and stable folding of GatY. When expressed alone, GatZ does not show any aldolase activity. Is involved in the catabolism of galactitol. This chain is D-tagatose-1,6-bisphosphate aldolase subunit GatZ, found in Escherichia coli O8 (strain IAI1).